The sequence spans 215 residues: Pyridoxine/pyridoxamine 5'-phosphate oxidase (215 aa).

Substrate-binding positions include Arg9–Tyr12 and Lys69. FMN contacts are provided by residues Arg64 to Lys69, Phe79 to Thr80, Lys86, and Gln108. Tyr126, Arg130, and Ser134 together coordinate substrate. FMN is bound by residues Gln143–Ser144 and Trp188. Arg194–His196 contacts substrate. Arg198 serves as a coordination point for FMN.

This sequence belongs to the pyridoxamine 5'-phosphate oxidase family. Homodimer. FMN is required as a cofactor.

The enzyme catalyses pyridoxamine 5'-phosphate + O2 + H2O = pyridoxal 5'-phosphate + H2O2 + NH4(+). The catalysed reaction is pyridoxine 5'-phosphate + O2 = pyridoxal 5'-phosphate + H2O2. It participates in cofactor metabolism; pyridoxal 5'-phosphate salvage; pyridoxal 5'-phosphate from pyridoxamine 5'-phosphate: step 1/1. It functions in the pathway cofactor metabolism; pyridoxal 5'-phosphate salvage; pyridoxal 5'-phosphate from pyridoxine 5'-phosphate: step 1/1. Functionally, catalyzes the oxidation of either pyridoxine 5'-phosphate (PNP) or pyridoxamine 5'-phosphate (PMP) into pyridoxal 5'-phosphate (PLP). This chain is Pyridoxine/pyridoxamine 5'-phosphate oxidase, found in Pseudomonas fluorescens (strain Pf0-1).